The sequence spans 265 residues: MSDLISALLLGILEGLTEFLPISSTGHLLIAEQWLGRRSDFFNIVIQAGAILAICLALRQRLWTLATGLGERDNRDYVLKVSVAFLVTAVVGLIVRKAGWQLPETLQPVAWALLIGGVWMLVAEHVAGKLPERDVVTWKVAIAVGLAQVVAGVFPGTSRSASTIFIAMLLGLSRRSAAADFVFMVGIPTMFAASGYALLEMYKEGGFGTEHWADVAVAFVAATITGFVVVKWLLSYIKKHRFTVFAVYRIVLGAALLLWLPAAAG.

7 helical membrane-spanning segments follow: residues Arg-38–Leu-58, Arg-75–Val-95, Pro-108–Gly-128, Val-135–Pro-155, Phe-181–Met-201, Val-215–Ser-235, and Val-244–Ala-264.

It belongs to the UppP family.

It is found in the cell inner membrane. It carries out the reaction di-trans,octa-cis-undecaprenyl diphosphate + H2O = di-trans,octa-cis-undecaprenyl phosphate + phosphate + H(+). Catalyzes the dephosphorylation of undecaprenyl diphosphate (UPP). Confers resistance to bacitracin. The polypeptide is Undecaprenyl-diphosphatase (Xanthomonas oryzae pv. oryzae (strain MAFF 311018)).